A 130-amino-acid chain; its full sequence is uncharacterized protein (130 aa).

Residues 1–28 (MELAKERNGPHQKHHGQCQNHCTSPNTV) are disordered. Polar residues predominate over residues 17–28 (QCQNHCTSPNTV).

This is an uncharacterized protein from Saccharomyces cerevisiae (strain ATCC 204508 / S288c) (Baker's yeast).